Reading from the N-terminus, the 139-residue chain is Ribonuclease VapC3 (139 aa).

Residues 14–121 (EAIVLDTGAF…VATDDYTLQR (108 aa)) form the PINc domain. Aspartate 19 contributes to the Mg(2+) binding site.

The protein belongs to the PINc/VapC protein family. Mg(2+) is required as a cofactor.

Toxic component of a type II toxin-antitoxin (TA) system. An RNase. The chain is Ribonuclease VapC3 from Aeropyrum pernix (strain ATCC 700893 / DSM 11879 / JCM 9820 / NBRC 100138 / K1).